Here is a 283-residue protein sequence, read N- to C-terminus: Transmembrane protein 119 (283 aa).

Residues 1–25 (MVSAAAPSLLILLLLLLGSVPATDA) form the signal peptide. Topologically, residues 26-96 (RSVPLKATFL…IVDFFRQYVM (71 aa)) are extracellular. S41 carries O-linked (Xyl...) (chondroitin sulfate) serine glycosylation. The segment covering 43–52 (EAEGSSASSP) has biased composition (low complexity). The tract at residues 43–76 (EAEGSSASSPSLPPPWTPALSPTSMGPQPITLGG) is disordered. A helical transmembrane segment spans residues 97–117 (LIAVVGSLAFLLMFIVCAAVI). Residues 118–283 (TRQKQKASAY…CACSSVHPSV (166 aa)) lie on the Cytoplasmic side of the membrane. 2 disordered regions span residues 136–168 (KYVDQSDRAGGPRAFSEVPDRAPDSRPEEALDS) and 183–283 (LKSP…HPSV). Composition is skewed to basic and acidic residues over residues 153-164 (VPDRAPDSRPEE) and 198-213 (RMVEGRGAEEEEKGSQ). Over residues 238–264 (GVLEGAVVAGEGQGELEGSLLLAQEAQ) the composition is skewed to low complexity. S272 is modified (phosphoserine).

Interacts with SMAD1, SMAD5 and RUNX2. Expressed in brain microglia (at protein level). Detected in urine (at protein level). Elevated expression levels seen in the brain of patients with Alzheimer disease. Expressed by osteoblast-like cells in bone tissues and follicular dendritic cells in lymphoid tissues.

It localises to the cell membrane. The protein resides in the cytoplasm. It is found in the endoplasmic reticulum membrane. Its subcellular location is the secreted. In terms of biological role, plays an important role in bone formation and normal bone mineralization. Promotes the differentiation of myoblasts into osteoblasts. May induce the commitment and differentiation of myoblasts into osteoblasts through an enhancement of BMP2 production and interaction with the BMP-RUNX2 pathway. Up-regulates the expression of ATF4, a transcription factor which plays a central role in osteoblast differentiation. Essential for normal spermatogenesis and late testicular differentiation. This Homo sapiens (Human) protein is Transmembrane protein 119 (TMEM119).